Reading from the N-terminus, the 462-residue chain is 3-isopropylmalate dehydratase large subunit (462 aa).

C337, C397, and C400 together coordinate [4Fe-4S] cluster.

Belongs to the aconitase/IPM isomerase family. LeuC type 1 subfamily. As to quaternary structure, heterodimer of LeuC and LeuD. [4Fe-4S] cluster is required as a cofactor.

It catalyses the reaction (2R,3S)-3-isopropylmalate = (2S)-2-isopropylmalate. It participates in amino-acid biosynthesis; L-leucine biosynthesis; L-leucine from 3-methyl-2-oxobutanoate: step 2/4. In terms of biological role, catalyzes the isomerization between 2-isopropylmalate and 3-isopropylmalate, via the formation of 2-isopropylmaleate. This chain is 3-isopropylmalate dehydratase large subunit, found in Listeria monocytogenes serotype 4b (strain CLIP80459).